The chain runs to 91 residues: Putative septation protein SpoVG (91 aa).

Belongs to the SpoVG family.

Functionally, could be involved in septation. The chain is Putative septation protein SpoVG from Clostridium botulinum (strain Alaska E43 / Type E3).